The chain runs to 329 residues: Sideroflexin-1.1 (329 aa).

5 consecutive transmembrane segments (helical) span residues 100 to 122 (MPGN…GVVF), 150 to 167 (LFVS…VALG), 178 to 198 (LAAR…NIPM), 232 to 254 (VTLS…MNRI), and 274 to 294 (IQTL…CALF).

The protein belongs to the sideroflexin family.

The protein resides in the mitochondrion inner membrane. It catalyses the reaction L-serine(in) = L-serine(out). The catalysed reaction is L-alanine(in) = L-alanine(out). The enzyme catalyses L-cysteine(in) = L-cysteine(out). Amino acid transporter importing serine, an essential substrate of the mitochondrial branch of the one-carbon pathway, into mitochondria. Mitochondrial serine is then converted to glycine and formate, which exits to the cytosol where it is used to generate the charged folates that serve as one-carbon donors. May also transport other amino acids including alanine and cysteine. The polypeptide is Sideroflexin-1.1 (Caenorhabditis elegans).